The primary structure comprises 287 residues: Bifunctional protein FolD (287 aa).

Residues 166-168 and Ile-232 each bind NADP(+); that span reads GAS.

Belongs to the tetrahydrofolate dehydrogenase/cyclohydrolase family. As to quaternary structure, homodimer.

The enzyme catalyses (6R)-5,10-methylene-5,6,7,8-tetrahydrofolate + NADP(+) = (6R)-5,10-methenyltetrahydrofolate + NADPH. It catalyses the reaction (6R)-5,10-methenyltetrahydrofolate + H2O = (6R)-10-formyltetrahydrofolate + H(+). The protein operates within one-carbon metabolism; tetrahydrofolate interconversion. Catalyzes the oxidation of 5,10-methylenetetrahydrofolate to 5,10-methenyltetrahydrofolate and then the hydrolysis of 5,10-methenyltetrahydrofolate to 10-formyltetrahydrofolate. The chain is Bifunctional protein FolD from Pectobacterium carotovorum subsp. carotovorum (strain PC1).